Here is a 310-residue protein sequence, read N- to C-terminus: Ribosomal RNA small subunit methyltransferase H (310 aa).

S-adenosyl-L-methionine-binding positions include 32-34, D52, F79, D100, and Q107; that span reads GGH.

Belongs to the methyltransferase superfamily. RsmH family.

It localises to the cytoplasm. The catalysed reaction is cytidine(1402) in 16S rRNA + S-adenosyl-L-methionine = N(4)-methylcytidine(1402) in 16S rRNA + S-adenosyl-L-homocysteine + H(+). Functionally, specifically methylates the N4 position of cytidine in position 1402 (C1402) of 16S rRNA. This chain is Ribosomal RNA small subunit methyltransferase H, found in Bacillus cereus (strain B4264).